The primary structure comprises 307 residues: MNQVWVTGDAVVDLIPESETSLLKCPGGAPANVAVAIARLSGKSAFFGRVGDDPFGRFMQSILDQEGVCTEFLIKDPEQRTSTVVVDLDDQGERSFTFMVKPSADQFMSVEDMGNFKQGDWLHVCSISLANEPSRSSTFEAIKRAKAAGGFISFDPNLRDEVWQDQSEIQAVVMKAVAMADVVKFSEEELLFLTDSTSMAQGLQQIAAMNIALVLVTQGAKGVWRVFESQSELITGQVVSPIDTTGAGDAFVGGLLACLSRHADWKNHPVVSSAIQWANGCGALATTQKGAMTALPTQTELLRFIGQ.

The protein belongs to the carbohydrate kinase PfkB family.

It carries out the reaction D-fructose + ATP = D-fructose 6-phosphate + ADP + H(+). The sequence is that of Fructokinase (scrK) from Vibrio alginolyticus.